A 203-amino-acid polypeptide reads, in one-letter code: 8-oxoguanine DNA glycosylase/AP lyase (203 aa).

Active-site residues include lysine 128 and aspartate 146.

This sequence belongs to the type-2 OGG1 family.

The enzyme catalyses 2'-deoxyribonucleotide-(2'-deoxyribose 5'-phosphate)-2'-deoxyribonucleotide-DNA = a 3'-end 2'-deoxyribonucleotide-(2,3-dehydro-2,3-deoxyribose 5'-phosphate)-DNA + a 5'-end 5'-phospho-2'-deoxyribonucleoside-DNA + H(+). In terms of biological role, catalyzes the excision of an oxidatively damaged form of guanine (7,8-dihydro-8-oxoguanine = 8-oxoG) from DNA. Also cleaves the DNA backbone at apurinic/apyrimidinic sites (AP sites). The polypeptide is 8-oxoguanine DNA glycosylase/AP lyase (Sulfolobus acidocaldarius (strain ATCC 33909 / DSM 639 / JCM 8929 / NBRC 15157 / NCIMB 11770)).